Here is a 297-residue protein sequence, read N- to C-terminus: Homoserine kinase (297 aa).

An ATP-binding site is contributed by 82 to 92 (PLTRGLGSSAS).

This sequence belongs to the GHMP kinase family. Homoserine kinase subfamily.

The protein localises to the cytoplasm. It carries out the reaction L-homoserine + ATP = O-phospho-L-homoserine + ADP + H(+). It participates in amino-acid biosynthesis; L-threonine biosynthesis; L-threonine from L-aspartate: step 4/5. Functionally, catalyzes the ATP-dependent phosphorylation of L-homoserine to L-homoserine phosphate. This Bacillus cereus (strain ATCC 10987 / NRS 248) protein is Homoserine kinase.